We begin with the raw amino-acid sequence, 836 residues long: MVLLNGKLKYIAVVAIFYNLIILLVKEKFPYICTKKKFHAISNRILYEYLNNFVSKDIFRREDITLKNLNFVQTNLKSDKDAEIKENRDTQSVDDNMFQRVYKFILNFFYGNKKNRINKSMNYGKYDNFNKINDIFEFMRNNGLPINITSVCLIDTGLNIKDALINYFLNHDISTYNSYTYHSVNINYKKPDSFNFGINSENCDEDNYSECESTFLENHNGHGKYEDKSTIQGDSLKLIEKKYDKNVDLQRSGIDVEICKAFNNSKEKKNSLNIIPVIKCLEYCKTKNVKIIHMDYNINEQNEQLIQIMDDLKNSEIFVILPSEKLFNEKPYEDNSVIYPSSFFEKFENVFFIGSLDYSDMSSDDADIASNFQIQKNEYLKYRKNNVFLLDSINSSLKKRDDHDILYYEIKYSSAFFINIITIILNIYPNMSIKELRNILSYSIPSKETAQLKTENIFEGNFDINKFIHILLNRGINSSGFVRKYKDVTPNESTNKIFLLEDQKDADIEPQKDSSIDIYCDEGGSDEDIVSTSNGLDVYSEYSHSNNKSDQLLNDEKGLKYETYKDLYSVKENDIYVFESNNPTNSSFMQMNYDDKIKSKYLDNLEEANYQNHRTQFEINRNDNRYPIISEDNLRDRQNMHNIQMLNDGINYSENANNIEELYDNDFEDYRGKDLNPEYNKIRDNNNNKNINKEFGILNTWRKNNEGLYLSDSEEESQPFKWMDMHVDDIYQDRKKRLKGNNYDNRNGRVRRIYEDNKRGRYIKNRNMQKKKNFDRNLKNKRYLNRRTKRHINEKNKRIMREKKNKYNNSVLKRNEMKSHNNSQKTPKIIPRKYSR.

Active-site charge relay system residues include Asp155, His222, and Ser414. Residues 802 to 836 are disordered; it reads EKKNKYNNSVLKRNEMKSHNNSQKTPKIIPRKYSR.

It belongs to the peptidase S8 family.

It localises to the cell membrane. It carries out the reaction Hydrolysis of proteins with broad specificity for peptide bonds, and a preference for a large uncharged residue in P1. Hydrolyzes peptide amides.. In terms of biological role, probable serine protease which plays a role in ookinete traversal of the mosquito host midgut epithelium. The polypeptide is Subtilisin-like protease PIMMS2 (Plasmodium berghei (strain Anka)).